The chain runs to 351 residues: Translation initiation factor eIF2B subunit beta (351 aa).

It belongs to the eIF-2B alpha/beta/delta subunits family. As to quaternary structure, component of the translation initiation factor 2B (eIF2B) complex which is a heterodecamer of two sets of five different subunits: alpha, beta, gamma, delta and epsilon. Subunits alpha, beta and delta comprise a regulatory subcomplex and subunits epsilon and gamma comprise a catalytic subcomplex. Within the complex, the hexameric regulatory complex resides at the center, with the two heterodimeric catalytic subcomplexes bound on opposite sides.

Its subcellular location is the cytoplasm. The protein localises to the cytosol. Its activity is regulated as follows. Activated by the chemical integrated stress response (ISR) inhibitor ISRIB which stimulates guanine nucleotide exchange factor activity for both phosphorylated and unphosphorylated eIF2. Acts as a component of the translation initiation factor 2B (eIF2B) complex, which catalyzes the exchange of GDP for GTP on eukaryotic initiation factor 2 (eIF2) gamma subunit. Its guanine nucleotide exchange factor activity is repressed when bound to eIF2 complex phosphorylated on the alpha subunit, thereby limiting the amount of methionyl-initiator methionine tRNA available to the ribosome and consequently global translation is repressed. This is Translation initiation factor eIF2B subunit beta (EIF2B2) from Homo sapiens (Human).